A 471-amino-acid chain; its full sequence is Ribulose bisphosphate carboxylase large chain 2 (471 aa).

Residues N116 and T166 each coordinate substrate. The active-site Proton acceptor is K168. K170 contributes to the substrate binding site. Mg(2+)-binding residues include K194, D196, and E197. K194 carries the post-translational modification N6-carboxylysine. H287 (proton acceptor) is an active-site residue. Substrate is bound by residues R288, H320, and S372.

It belongs to the RuBisCO large chain family. Type I subfamily. Heterohexadecamer of 8 large chains and 8 small chains; disulfide-linked. The disulfide link is formed within the large subunit homodimers. The cofactor is Mg(2+). In terms of processing, the disulfide bond which can form in the large chain dimeric partners within the hexadecamer appears to be associated with oxidative stress and protein turnover.

It catalyses the reaction 2 (2R)-3-phosphoglycerate + 2 H(+) = D-ribulose 1,5-bisphosphate + CO2 + H2O. The enzyme catalyses D-ribulose 1,5-bisphosphate + O2 = 2-phosphoglycolate + (2R)-3-phosphoglycerate + 2 H(+). Functionally, ruBisCO catalyzes two reactions: the carboxylation of D-ribulose 1,5-bisphosphate, the primary event in carbon dioxide fixation, as well as the oxidative fragmentation of the pentose substrate. Both reactions occur simultaneously and in competition at the same active site. The protein is Ribulose bisphosphate carboxylase large chain 2 of Allochromatium vinosum (strain ATCC 17899 / DSM 180 / NBRC 103801 / NCIMB 10441 / D) (Chromatium vinosum).